The primary structure comprises 436 residues: Glutamate-1-semialdehyde 2,1-aminomutase (436 aa).

K270 bears the N6-(pyridoxal phosphate)lysine mark.

This sequence belongs to the class-III pyridoxal-phosphate-dependent aminotransferase family. HemL subfamily. Homodimer. The cofactor is pyridoxal 5'-phosphate.

The protein resides in the cytoplasm. The catalysed reaction is (S)-4-amino-5-oxopentanoate = 5-aminolevulinate. The protein operates within porphyrin-containing compound metabolism; protoporphyrin-IX biosynthesis; 5-aminolevulinate from L-glutamyl-tRNA(Glu): step 2/2. This Cutibacterium acnes (strain DSM 16379 / KPA171202) (Propionibacterium acnes) protein is Glutamate-1-semialdehyde 2,1-aminomutase.